Here is a 278-residue protein sequence, read N- to C-terminus: Large ribosomal subunit protein uL24m (278 aa).

Positions 109–142 constitute a KOW domain; that stretch reads FFPGDLVQVMVGKDKGRQGLVLTISRDSSEVVVD.

The protein belongs to the universal ribosomal protein uL24 family.

It is found in the mitochondrion. The chain is Large ribosomal subunit protein uL24m (mrpl-24) from Caenorhabditis briggsae.